Consider the following 210-residue polypeptide: Thiamine-phosphate synthase (210 aa).

Residues 38–42 and Asn-70 contribute to the 4-amino-2-methyl-5-(diphosphooxymethyl)pyrimidine site; that span reads QLREK. Positions 71 and 90 each coordinate Mg(2+). Position 109 (Ser-109) interacts with 4-amino-2-methyl-5-(diphosphooxymethyl)pyrimidine. 139 to 141 is a binding site for 2-[(2R,5Z)-2-carboxy-4-methylthiazol-5(2H)-ylidene]ethyl phosphate; it reads TPT. Lys-142 provides a ligand contact to 4-amino-2-methyl-5-(diphosphooxymethyl)pyrimidine. Residues Gly-170 and 190-191 each bind 2-[(2R,5Z)-2-carboxy-4-methylthiazol-5(2H)-ylidene]ethyl phosphate; that span reads VS.

Belongs to the thiamine-phosphate synthase family. The cofactor is Mg(2+).

The enzyme catalyses 2-[(2R,5Z)-2-carboxy-4-methylthiazol-5(2H)-ylidene]ethyl phosphate + 4-amino-2-methyl-5-(diphosphooxymethyl)pyrimidine + 2 H(+) = thiamine phosphate + CO2 + diphosphate. The catalysed reaction is 2-(2-carboxy-4-methylthiazol-5-yl)ethyl phosphate + 4-amino-2-methyl-5-(diphosphooxymethyl)pyrimidine + 2 H(+) = thiamine phosphate + CO2 + diphosphate. It catalyses the reaction 4-methyl-5-(2-phosphooxyethyl)-thiazole + 4-amino-2-methyl-5-(diphosphooxymethyl)pyrimidine + H(+) = thiamine phosphate + diphosphate. Its pathway is cofactor biosynthesis; thiamine diphosphate biosynthesis; thiamine phosphate from 4-amino-2-methyl-5-diphosphomethylpyrimidine and 4-methyl-5-(2-phosphoethyl)-thiazole: step 1/1. Functionally, condenses 4-methyl-5-(beta-hydroxyethyl)thiazole monophosphate (THZ-P) and 2-methyl-4-amino-5-hydroxymethyl pyrimidine pyrophosphate (HMP-PP) to form thiamine monophosphate (TMP). This chain is Thiamine-phosphate synthase, found in Leptospira biflexa serovar Patoc (strain Patoc 1 / Ames).